We begin with the raw amino-acid sequence, 60 residues long: Large ribosomal subunit protein uL30 (60 aa).

The protein belongs to the universal ribosomal protein uL30 family. In terms of assembly, part of the 50S ribosomal subunit.

This chain is Large ribosomal subunit protein uL30, found in Kineococcus radiotolerans (strain ATCC BAA-149 / DSM 14245 / SRS30216).